The chain runs to 421 residues: UDP-N-acetylglucosamine 1-carboxyvinyltransferase 1 (421 aa).

Residue Lys-22–Asn-23 participates in phosphoenolpyruvate binding. Residue Arg-95 coordinates UDP-N-acetyl-alpha-D-glucosamine. The active-site Proton donor is Cys-119. The residue at position 119 (Cys-119) is a 2-(S-cysteinyl)pyruvic acid O-phosphothioketal. Residues Arg-124 to Gln-128, Asp-308, and Val-330 each bind UDP-N-acetyl-alpha-D-glucosamine.

Belongs to the EPSP synthase family. MurA subfamily.

It localises to the cytoplasm. The catalysed reaction is phosphoenolpyruvate + UDP-N-acetyl-alpha-D-glucosamine = UDP-N-acetyl-3-O-(1-carboxyvinyl)-alpha-D-glucosamine + phosphate. The protein operates within cell wall biogenesis; peptidoglycan biosynthesis. Its function is as follows. Cell wall formation. Adds enolpyruvyl to UDP-N-acetylglucosamine. The sequence is that of UDP-N-acetylglucosamine 1-carboxyvinyltransferase 1 from Staphylococcus aureus (strain MRSA252).